The chain runs to 525 residues: Heat shock factor protein 1 (525 aa).

At M1 the chain carries N-acetylmethionine. Residues 15–120 (VPAFLTKLWT…LLENIKRKVT (106 aa)) form a DNA-binding domain region. At K80 the chain carries N6-acetyllysine. Position 91 is an N6-acetyllysine; alternate (K91). Residue K91 forms a Glycyl lysine isopeptide (Lys-Gly) (interchain with G-Cter in SUMO2); alternate linkage. K118 carries the N6-acetyllysine modification. S121 is subject to Phosphoserine; by MAPKAPK2. Positions 130 to 203 (IKIRQDSVTK…ISLVQSNRIL (74 aa)) are hydrophobic repeat HR-A/B. K131 is covalently cross-linked (Glycyl lysine isopeptide (Lys-Gly) (interchain with G-Cter in SUMO2)). T142 bears the Phosphothreonine; by CK2 mark. K150 and K188 each carry N6-acetyllysine. The segment at 203-224 (LGVKRKIPLMLNDGGPAHPMPK) is d domain. Residue K208 is modified to N6-acetyllysine; alternate. K208 is covalently cross-linked (Glycyl lysine isopeptide (Lys-Gly) (interchain with G-Cter in SUMO2); alternate). The segment at 221 to 310 (PMPKYGRQYS…PPSPPQSPRA (90 aa)) is regulatory domain. K224 participates in a covalent cross-link: Glycyl lysine isopeptide (Lys-Gly) (interchain with G-Cter in SUMO2). Position 230 is a phosphoserine; by CAMK2A (S230). The segment at 266-365 (SDITELAPGS…RPPSPLPASA (100 aa)) is disordered. Residues 272–283 (APGSPVASSGGS) show a composition bias toward low complexity. Residues S275 and S292 each carry the phosphoserine modification. K298 is subject to N6-acetyllysine; alternate. K298 is covalently cross-linked (Glycyl lysine isopeptide (Lys-Gly) (interchain with G-Cter in SUMO2); alternate). K298 participates in a covalent cross-link: Glycyl lysine isopeptide (Lys-Gly) (interchain with G-Cter in SUMO); alternate. A Phosphoserine; by GSK3-beta modification is found at S303. S307 carries the phosphoserine; by MAPK3 modification. Phosphoserine is present on residues S314 and S319. Phosphoserine; by PKA is present on S320. T324 bears the Phosphothreonine mark. At S327 the chain carries Phosphoserine; by MAPK12. Residue S346 is modified to Phosphoserine. The residue at position 359 (S359) is a Phosphoserine; by MAPK8. The interval 367-525 (EKCLSVACLD…PPKAKDPTVS (159 aa)) is transactivation domain. The hydrophobic repeat HR-C stretch occupies residues 380-405 (LSDHLDAMDSNLDNLQTMLTSHGFSV). A 9aaTAD motif is present at residues 408-416 (STLLDLFSP). S415 carries the post-translational modification Phosphoserine; by PLK1. At S440 the chain carries Phosphoserine. The tract at residues 495 to 525 (YFSEGDDYSDDPTISLLTGSEPPKAKDPTVS) is disordered. Position 520 is an N6-acetyllysine (K520).

The protein belongs to the HSF family. As to quaternary structure, monomer; cytoplasmic latent and transcriptionally inactive monomeric form in unstressed cells. Homotrimer; in response to stress, such as heat shock, homotrimerizes and translocates into the nucleus, binds to heat shock element (HSE) sequences in promoter of heat shock protein (HSP) genes and acquires transcriptional ability. Interacts (via monomeric form) with FKBP4; this interaction occurs in unstressed cells. Associates (via monomeric form) with HSP90 proteins in a multichaperone complex in unnstressed cell; this association maintains HSF1 in a non-DNA-binding and transcriptional inactive form by preventing HSF1 homotrimerization. Homotrimeric transactivation activity is modulated by protein-protein interactions and post-translational modifications. Interacts with HSP90AA1; this interaction is decreased in a IER5-dependent manner, promoting HSF1 accumulation in the nucleus, homotrimerization and DNA-binding activities. Part (via regulatory domain in the homotrimeric form) of a large heat shock-induced HSP90-dependent multichaperone complex at least composed of FKBP4, FKBP5, HSP90 proteins, PPID, PPP5C and PTGES3; this association maintains the HSF1 homotrimeric DNA-bound form in a transcriptionally inactive form. Interacts with BAG3 (via BAG domain); this interaction occurs in normal and heat-shocked cells promoting nuclear shuttling of HSF1 in a BAG3-dependent manner. Interacts (via homotrimeric and hyperphosphorylated form) with FKBP4; this interaction occurs upon heat shock in a HSP90-dependent multichaperone complex. Interacts (via homotrimeric form preferentially) with EEF1A proteins. In heat shocked cells, stress-denatured proteins compete with HSF1 homotrimeric DNA-bound form for association of the HSP90-dependent multichaperone complex, and hence alleviating repression of HSF1-mediated transcriptional activity. Interacts (via homotrimeric form preferentially) with DAXX; this interaction relieves homotrimeric HSF1 from repression of its transcriptional activity by HSP90-dependent multichaperone complex upon heat shock. Interacts (via D domain and preferentially with hyperphosphorylated form) with JNK1; this interaction occurs under both normal growth conditions and immediately upon heat shock. Interacts (via D domain and preferentially with hyperphosphorylated form) with MAPK3; this interaction occurs upon heat shock. Interacts with IER5 (via central region); this interaction promotes PPP2CA-induced dephosphorylation on Ser-121, Ser-307, Ser-314 and Thr-324 and HSF1 transactivation activity. Found in a ribonucleoprotein complex composed of the HSF1 homotrimeric form, translation elongation factor eEF1A proteins and non-coding RNA heat shock RNA-1 (HSR1); this complex occurs upon heat shock and stimulates HSF1 DNA-binding activity. Interacts (via transactivation domain) with HSPA1A/HSP70 and DNAJB1; these interactions result in the inhibition of heat shock- and HSF1-induced transcriptional activity during the attenuation and recovery phase from heat shock. Interacts (via Ser-303 and Ser-307 phosphorylated form) with YWHAE; this interaction promotes HSF1 sequestration in the cytoplasm in an ERK-dependent manner. Found in a complex with IER5 and PPP2CA. Interacts with TPR; this interaction increases upon heat shock and stimulates export of HSP70 mRNA. Interacts with SYMPK (via N-terminus) and CSTF2; these interactions occur upon heat shock. Interacts (via transactivation domain) with HSPA8. Interacts with EEF1D; this interaction occurs at heat shock promoter element (HSE) sequences. Interacts with MAPKAPK2. Interacts with PRKACA/PKA. Interacts (via transactivation domain) with GTF2A2. Interacts (via transactivation domain) with GTF2B. Interacts (via transactivation domain) with TBP. Interacts with CDK9, CCNT1 and EP300. Interacts (via N-terminus) with XRCC5 (via N-terminus) and XRCC6 (via N-terminus); these interactions are direct and prevent XRCC5/XRCC6 heterodimeric binding and non-homologous end joining (NHEJ) repair activities induced by ionizing radiation (IR). Interacts with PLK1; this interaction occurs during the early mitotic period, increases upon heat shock but does not modulate neither HSF1 homotrimerization and DNA-binding activities. Interacts with CDC20; this interaction occurs in mitosis in a MAD2L1-dependent manner and prevents PLK1-stimulated degradation of HSF1 by blocking the recruitment of the SCF(BTRC) ubiquitin ligase complex. Interacts with MAD2L1; this interaction occurs in mitosis. Interacts with BTRC; this interaction occurs during mitosis, induces its ubiquitin-dependent degradation following stimulus-dependent phosphorylation, a process inhibited by CDC20. Interacts with HSP90AA1 and HSP90AB1. Forms a complex with TTC5/STRAP and p300/EP300; these interactions augment chromatin-bound HSF1 and p300/EP300 histone acetyltransferase activity. Phosphorylated. Phosphorylated in unstressed cells; this phosphorylation is constitutive and implicated in the repression of HSF1 transcriptional activity. Phosphorylated on Ser-121 by MAPKAPK2; this phosphorylation promotes interaction with HSP90 proteins and inhibits HSF1 homotrimerization, DNA-binding and transactivation activities. Phosphorylation on Ser-303 by GSK3B/GSK3-beta and on Ser-307 by MAPK3 within the regulatory domain is involved in the repression of HSF1 transcriptional activity and occurs in a RAF1-dependent manner. Phosphorylation on Ser-303 and Ser-307 increases HSF1 nuclear export in a YWHAE- and XPO1/CRM1-dependent manner. Phosphorylation on Ser-307 is a prerequisite for phosphorylation on Ser-303. According to, Ser-303 is not phosphorylated in unstressed cells. Phosphorylated on Ser-415 by PLK1; phosphorylation promotes nuclear translocation upon heat shock. Hyperphosphorylated upon heat shock and during the attenuation and recovery phase period of the heat shock response. Phosphorylated on Thr-142; this phosphorylation increases HSF1 transactivation activity upon heat shock. Phosphorylation on Ser-230 by CAMK2A; this phosphorylation enhances HSF1 transactivation activity upon heat shock. Phosphorylation on Ser-327 by MAPK12; this phosphorylation enhances HSF1 nuclear translocation, homotrimerization and transactivation activities upon heat shock. Phosphorylated on Ser-320 by PRKACA/PKA; this phosphorylation promotes nuclear localization and transcriptional activity upon heat shock. Phosphorylated on Ser-359 by MAPK8; this phosphorylation occurs upon heat shock, induces HSF1 translocation into nuclear stress bodies and negatively regulates transactivation activity. Neither basal nor stress-inducible phosphorylation on Ser-230, Ser-292, Ser-303, Ser-307, Ser-314, Ser-319, Ser-320, Thr-324, Ser-327, Ser-339, Ser-346, Ser-359 and Ser-364 within the regulatory domain is involved in the regulation of HSF1 subcellular localization or DNA-binding activity; however, it negatively regulates HSF1 transactivation activity. Phosphorylated by PLK1 in the early mitotic period; this phosphorylation regulates HSF1 localization to the spindle pole, the recruitment of the SCF(BTRC) ubiquitin ligase complex inducing HSF1 degradation, and hence mitotic progression. Dephosphorylated on Ser-121, Ser-307, Ser-314, Thr-324 by phosphatase PPP2CA in an IER5-dependent manner, leading to HSF1-mediated transactivation activity. In terms of processing, sumoylated with SUMO1 and SUMO2 upon heat shock in a ERK2-dependent manner. Sumoylated by SUMO1 on Lys-298; sumoylation occurs upon heat shock and promotes its localization to nuclear stress bodies and DNA-binding activity. Phosphorylation on Ser-303 and Ser-307 is probably a prerequisite for sumoylation. Post-translationally, acetylated on Lys-118; this acetylation is decreased in a IER5-dependent manner. Acetylated on Lys-118, Lys-208 and Lys-298; these acetylations occur in a EP300-dependent manner. Acetylated on Lys-80; this acetylation inhibits DNA-binding activity upon heat shock. Deacetylated on Lys-80 by SIRT1; this deacetylation increases DNA-binding activity. Ubiquitinated by SCF(BTRC) and degraded following stimulus-dependent phosphorylation by PLK1 in mitosis. Polyubiquitinated. Undergoes proteasomal degradation upon heat shock and during the attenuation and recovery phase period of the heat shock response.

It localises to the nucleus. Its subcellular location is the cytoplasm. The protein localises to the nucleoplasm. The protein resides in the perinuclear region. It is found in the cytoskeleton. It localises to the spindle pole. Its subcellular location is the microtubule organizing center. The protein localises to the centrosome. The protein resides in the chromosome. It is found in the centromere. It localises to the kinetochore. Functionally, functions as a stress-inducible and DNA-binding transcription factor that plays a central role in the transcriptional activation of the heat shock response (HSR), leading to the expression of a large class of molecular chaperones, heat shock proteins (HSPs), that protect cells from cellular insult damage. In unstressed cells, is present in a HSP90-containing multichaperone complex that maintains it in a non-DNA-binding inactivated monomeric form. Upon exposure to heat and other stress stimuli, undergoes homotrimerization and activates HSP gene transcription through binding to site-specific heat shock elements (HSEs) present in the promoter regions of HSP genes. Upon heat shock stress, forms a chromatin-associated complex with TTC5/STRAP and p300/EP300 to stimulate HSR transcription, therefore increasing cell survival. Activation is reversible, and during the attenuation and recovery phase period of the HSR, returns to its unactivated form. Binds to inverted 5'-NGAAN-3' pentamer DNA sequences. Binds to chromatin at heat shock gene promoters. Activates transcription of transcription factor FOXR1 which in turn activates transcription of the heat shock chaperones HSPA1A and HSPA6 and the antioxidant NADPH-dependent reductase DHRS2. Also serves several other functions independently of its transcriptional activity. Involved in the repression of Ras-induced transcriptional activation of the c-fos gene in heat-stressed cells. Positively regulates pre-mRNA 3'-end processing and polyadenylation of HSP70 mRNA upon heat-stressed cells in a symplekin (SYMPK)-dependent manner. Plays a role in nuclear export of stress-induced HSP70 mRNA. Plays a role in the regulation of mitotic progression. Also plays a role as a negative regulator of non-homologous end joining (NHEJ) repair activity in a DNA damage-dependent manner. Involved in stress-induced cancer cell proliferation in a IER5-dependent manner. This chain is Heat shock factor protein 1, found in Bos taurus (Bovine).